A 90-amino-acid chain; its full sequence is METTENTKKIGKREFVGIVTSDKMNKTIVVEVRTKKLHKLYKKYVSSSKKYKAHDEENTAHIGDTVRIVEHKPISKDKAWMLTEVIERAK.

The protein belongs to the universal ribosomal protein uS17 family. In terms of assembly, part of the 30S ribosomal subunit.

Functionally, one of the primary rRNA binding proteins, it binds specifically to the 5'-end of 16S ribosomal RNA. This Treponema denticola (strain ATCC 35405 / DSM 14222 / CIP 103919 / JCM 8153 / KCTC 15104) protein is Small ribosomal subunit protein uS17.